The following is a 357-amino-acid chain: DNA polymerase IV 2 (357 aa).

The region spanning Ile4–Gly184 is the UmuC domain. Mg(2+)-binding residues include Asp8 and Asp102. Glu103 is an active-site residue.

This sequence belongs to the DNA polymerase type-Y family. In terms of assembly, monomer. Mg(2+) is required as a cofactor.

It is found in the cytoplasm. It carries out the reaction DNA(n) + a 2'-deoxyribonucleoside 5'-triphosphate = DNA(n+1) + diphosphate. In terms of biological role, poorly processive, error-prone DNA polymerase involved in untargeted mutagenesis. Copies undamaged DNA at stalled replication forks, which arise in vivo from mismatched or misaligned primer ends. These misaligned primers can be extended by PolIV. Exhibits no 3'-5' exonuclease (proofreading) activity. May be involved in translesional synthesis, in conjunction with the beta clamp from PolIII. This Agrobacterium fabrum (strain C58 / ATCC 33970) (Agrobacterium tumefaciens (strain C58)) protein is DNA polymerase IV 2 (dinB2).